A 176-amino-acid polypeptide reads, in one-letter code: Pituitary adenylate cyclase-activating polypeptide (176 aa).

The signal sequence occupies residues 1–24 (MTMCSGARLALLVYGILMHSSVYG). The propeptide occupies 25–80 (SPAASGLRFPGIRPENEVYDEDGNPQQDFYDSESLGVGSPASALRDAYALYYPAEE). The tract at residues 98 to 135 (QPSARRSPADAHGQGLGWDPGGSADDDSEPLSKRHSDG) is disordered. The tract at residues 150–158 (VKKYLAAVL) is important for receptor binding. The residue at position 158 (Leu-158) is a Leucine amide. Lys-169 is subject to Lysine amide. The propeptide occupies 173–176 (IPYL).

Belongs to the glucagon family. As to quaternary structure, interacts with ADCYAP1R1 (via N-terminal extracellular domain); both PACAP27 and PACAP38 neuropeptides function as ligand for the ADCYAP1R1 receptor, which modulates the activity of downstream effectors. Interacts with VIPR1 and VIPR2; functions as ligand for VIPR1 and VIPR2 receptors, which modulate the activity of downstream effectors.

Its subcellular location is the secreted. PACAP is a neuropeptide involved in diverse array of physiological processes through activating the PACAP subfamily of class B1 G protein-coupled receptors: VIP receptor 1 (VIPR1), VIP receptor 2 (VIPR2), and PACAP type I receptor (ADCYAP1R1). Exerts neuroprotective and general cytoprotective effects due to anti-apoptotic, anti-inflammatory, and antioxidant actions. Promotes neuron projection development through the RAPGEF2/Rap1/B-Raf/ERK pathway. In chromaffin cells, induces long-lasting increase of intracellular calcium concentrations and neuroendocrine secretion. Involved in the control of glucose homeostasis, induces insulin secretion by pancreatic beta cells. PACAP exists in two bioactive forms from proteolysis of the same precursor protein, PACAP27 and PACAP38, which differ by eleven amino acid residues in the C-terminus. The protein is Pituitary adenylate cyclase-activating polypeptide (ADCYAP1) of Bos taurus (Bovine).